Reading from the N-terminus, the 139-residue chain is Large ribosomal subunit protein uL16 (139 aa).

Residues 1-19 (MLIPRKVKHRKQHHPKRSG) are compositionally biased toward basic residues. The tract at residues 1–22 (MLIPRKVKHRKQHHPKRSGVAK) is disordered.

This sequence belongs to the universal ribosomal protein uL16 family. In terms of assembly, part of the 50S ribosomal subunit.

Binds 23S rRNA and is also seen to make contacts with the A and possibly P site tRNAs. This is Large ribosomal subunit protein uL16 from Acidothermus cellulolyticus (strain ATCC 43068 / DSM 8971 / 11B).